We begin with the raw amino-acid sequence, 308 residues long: GATA transcription factor 9 (308 aa).

Residues 34-57 (DDGLNTLPDSSTLSTGTLTDSSNS) form a disordered region. The span at 39–57 (TLPDSSTLSTGTLTDSSNS) shows a compositional bias: low complexity. Positions 142–149 (KARSKRSR) match the Nuclear localization signal motif. The GATA-type zinc finger occupies 193–247 (SGGGRRCLHCATEKTPQWRTGPMGPKTLCNACGVRYKSGRLVPEYRPASSPTFVM).

It belongs to the type IV zinc-finger family. Class A subfamily.

It localises to the nucleus. In terms of biological role, transcriptional activator that specifically binds 5'-GATA-3' or 5'-GAT-3' motifs within gene promoters. May be involved in the regulation of some light-responsive genes. In Arabidopsis thaliana (Mouse-ear cress), this protein is GATA transcription factor 9 (GATA9).